Here is a 462-residue protein sequence, read N- to C-terminus: Fumarate hydratase class II (462 aa).

Substrate contacts are provided by residues 97 to 99 (SGT), 128 to 131 (HPND), 138 to 140 (STN), and Thr-186. The active-site Proton donor/acceptor is the His-187. Ser-317 is a catalytic residue. Residues Ser-318 and 323-325 (KVN) each bind substrate.

Belongs to the class-II fumarase/aspartase family. Fumarase subfamily. Homotetramer.

It localises to the cytoplasm. It carries out the reaction (S)-malate = fumarate + H2O. It functions in the pathway carbohydrate metabolism; tricarboxylic acid cycle; (S)-malate from fumarate: step 1/1. Its function is as follows. Involved in the TCA cycle. Catalyzes the stereospecific interconversion of fumarate to L-malate. This is Fumarate hydratase class II from Neisseria meningitidis serogroup A / serotype 4A (strain DSM 15465 / Z2491).